The primary structure comprises 1212 residues: Histone demethylase UTY (1212 aa).

TPR repeat units lie at residues 88 to 121 (SDFFCQLGHFNLLLEDYSKALSSYQRYYSLQTDY), 125 to 158 (AAFLYGLGLVYFYYNAFQWAIRAFQEVLYVDPNF), 165 to 193 (HLRLGFMFKMNTDYESSLKHFQLALIDCN), 200 to 233 (VEIQFHIAHLYETQRKYHSAKAAYEQLLQIESLP), 245 to 278 (GWMHHNMDLIGDNTTKERYAIQYLQKSLEEDPNS), 279 to 312 (GQSWYFLGRCYSCIGKVQDAFVSYRQSIDKSEAS), 313 to 346 (ADTWCSIGVLYQQQNQPMDALQAYICAVQLDHGH), and 347 to 380 (AAAWMDLGILYESCNQPQDAIKCYLNAARSKSCN). Positions 530-539 (FTKESKDSRS) are enriched in basic and acidic residues. Positions 530–555 (FTKESKDSRSKSLTSKTSRKDRDTSN) are disordered. Position 752 is a phosphothreonine (threonine 752). The segment at 865 to 886 (RRTQVKDYSDNESTCSDNSGRR) is disordered. A JmjC domain is found at 907–1070 (KWKLQLHELT…YKLAVERYEW (164 aa)). Residues histidine 958, glutamate 960, and histidine 1038 each coordinate Fe cation. Residues cysteine 1143, cysteine 1146, cysteine 1170, and cysteine 1173 each coordinate Zn(2+).

Belongs to the UTX family. Binds TLE1 and TLE2. It depends on L-ascorbate as a cofactor. Requires Fe(2+) as cofactor.

Its subcellular location is the nucleus. The catalysed reaction is N(6),N(6),N(6)-trimethyl-L-lysyl(27)-[histone H3] + 2 2-oxoglutarate + 2 O2 = N(6)-methyl-L-lysyl(27)-[histone H3] + 2 formaldehyde + 2 succinate + 2 CO2. In terms of biological role, male-specific histone demethylase that catalyzes trimethylated 'Lys-27' (H3K27me3) demethylation in histone H3. Has relatively low KDM activity. The protein is Histone demethylase UTY (Uty) of Mus musculus (Mouse).